Here is a 332-residue protein sequence, read N- to C-terminus: L-lactate dehydrogenase A chain (332 aa).

NAD(+) contacts are provided by residues 29-57 and R99; that span reads GAVG…VEDK. 3 residues coordinate substrate: R106, N138, and R169. N138 provides a ligand contact to NAD(+). H193 serves as the catalytic Proton acceptor. T248 contacts substrate.

This sequence belongs to the LDH/MDH superfamily. LDH family. Homotetramer.

It is found in the cytoplasm. It catalyses the reaction (S)-lactate + NAD(+) = pyruvate + NADH + H(+). It participates in fermentation; pyruvate fermentation to lactate; (S)-lactate from pyruvate: step 1/1. In terms of biological role, interconverts simultaneously and stereospecifically pyruvate and lactate with concomitant interconversion of NADH and NAD(+). The polypeptide is L-lactate dehydrogenase A chain (LDHA) (Alligator mississippiensis (American alligator)).